A 536-amino-acid polypeptide reads, in one-letter code: MADFSVFLGFLKQIPRCLSIFFTYLLFLQLWEVNSDKVWVLGPEESILARVGEAVEFPCRLSSYQDAEHMEIRWFRAQVSNVVYLYQEPQGRSSLQMAQFRNRTLFEAYDIAEGSVNLHILKVLPSDEGRYGCRFLSDNFSGEATWELEVAGSGSDPHISLQGFSGEGIQLQCSSSGWYPKPKVQWRGHQGQCLSPESEAITQNAQGLFSLETSVIVRGGAHSNVSCIIQNPLLPQKKEFVIQIADVFLPRMSPWKKAFVGTLVVLPLSLIVLTMLALRYFYKLRSFQEKQVKQGEEVREKLQTELDWRRSEGQAEWRAAQQYAADVTLDPATAHPSLEVSNNGKTVSSRLGVPSIAAGDPQRFSEQTCVLSRERFSSGRHYWEVHVGRRSRWFLGACLESVERSGPARLSPAAGYWVMGLWNRCEYFVLDPHRVALALRVPPRRIGVLLDYEAGKLSFFNVSDGSHIFSFTDTFSGALRAYLRPRAHDGSEHPDPMTICSLPVRGPQVLEENDNDNWLQPYEPLDPAWAVNEAVS.

The first 35 residues, 1–35 (MADFSVFLGFLKQIPRCLSIFFTYLLFLQLWEVNS), serve as a signal peptide directing secretion. 2 consecutive Ig-like V-type domains span residues 36 to 149 (DKVW…WELE) and 152 to 241 (GSGS…KEFV). At 36–257 (DKVWVLGPEE…FLPRMSPWKK (222 aa)) the chain is on the extracellular side. A disulfide bond links C59 and C133. 3 N-linked (GlcNAc...) asparagine glycosylation sites follow: N102, N139, and N224. Cysteines 173 and 227 form a disulfide. Residues 258 to 278 (AFVGTLVVLPLSLIVLTMLAL) traverse the membrane as a helical segment. Over 279–536 (RYFYKLRSFQ…PAWAVNEAVS (258 aa)) the chain is Cytoplasmic. Residues 307–506 (DWRRSEGQAE…MTICSLPVRG (200 aa)) enclose the B30.2/SPRY domain.

It belongs to the immunoglobulin superfamily. BTN/MOG family.

The protein resides in the membrane. In Mus musculus (Mouse), this protein is Butyrophilin-like protein 9 (Btnl9).